The primary structure comprises 305 residues: Urease accessory protein UreD (305 aa).

It belongs to the UreD family. In terms of assembly, ureD, UreF and UreG form a complex that acts as a GTP-hydrolysis-dependent molecular chaperone, activating the urease apoprotein by helping to assemble the nickel containing metallocenter of UreC. The UreE protein probably delivers the nickel.

It localises to the cytoplasm. In terms of biological role, required for maturation of urease via the functional incorporation of the urease nickel metallocenter. The chain is Urease accessory protein UreD from Delftia acidovorans (strain DSM 14801 / SPH-1).